Consider the following 245-residue polypeptide: Photosystem II protein PSBS2 (245 aa).

A chloroplast-targeting transit peptide spans 1–25 (MAMTLSTKAFAQRGVSARKNTVRVY). The next 4 membrane-spanning stretches (helical) occupy residues 72–92 (LFVG…EILT), 108–128 (GIEV…AAVL), 185–205 (LGFA…LAQF), and 217–237 (EFGL…EGSG).

This sequence belongs to the ELIP/psbS family.

The protein resides in the plastid. The protein localises to the chloroplast thylakoid membrane. Its function is as follows. Required for non-photochemical quenching (NPQ), a mechanism that converts and dissipates the harmful excess absorbed light energy into heat and protect the photosynthetic apparatus from photo-oxidative damage. Seems involved in the activation of NPQ, possibly by promoting conformational changes required for activation of LHCSR3-dependent quenching in the antenna of photosystem II (PSII). The protein is Photosystem II protein PSBS2 of Chlamydomonas reinhardtii (Chlamydomonas smithii).